The chain runs to 455 residues: Angiopoietin-related protein 3 (455 aa).

The first 16 residues, 1-16, serve as a signal peptide directing secretion; sequence MHTIKLFLFVVPLVIA. The sufficient to inhibit LPL lipase activity stretch occupies residues 17-165; it reads SRVDPDLSSF…QEHPEVTSLK (149 aa). The interval 17 to 207 is sufficient to inhibit LIPG/EL phospholipase activity; that stretch reads SRVDPDLSSF…EIEKQLRKTG (191 aa). Positions 32 to 56 are required for inhibition of LPL lipase activity; that stretch reads EPKSRFAMLDDVKILANGLLQLGHG. A coiled-coil region spans residues 85–206; sequence LSLRTNEIKE…KEIEKQLRKT (122 aa). Asparagine 115 carries N-linked (GlcNAc...) asparagine glycosylation. A disordered region spans residues 202 to 242; it reads QLRKTGIQEPSENSLSSKSRAPRTTPPLQLNETENTEQDDL. Positions 209 to 220 are enriched in polar residues; that stretch reads QEPSENSLSSKS. An O-linked (GlcNAc) threonine glycan is attached at threonine 226. Asparagine 232 is a glycosylation site (N-linked (GlcNAc...) asparagine). Positions 237 to 455 constitute a Fibrinogen C-terminal domain; the sequence is TEQDDLPADC…SSKMMLQPTT (219 aa). The cysteines at positions 246 and 274 are disulfide-linked. 2 N-linked (GlcNAc...) asparagine glycosylation sites follow: asparagine 296 and asparagine 357. A disulfide bond links cysteine 394 and cysteine 408.

As to quaternary structure, interacts with ANGPTL8. Interacts with ITGB3. In terms of processing, in part proteolytically cleaved by proprotein convertases; proposed to be involved in activation. In primary hepatocytes is intracellularily predominantly processed by FURIN and extracellularily by FURIN and PCSK6/PACE4. In 18.5 dpc embryos 75% of protein is found to be processed compared to 25 % in adults. Predominantly expressed in liver, weakly expressed in kidney and lung. Expressed in podocytes (at protein level). Expressed in hypothalamic neurons (at protein level). Expressed in bone marrow sinusoidal endothelial cells (at protein level).

The protein localises to the secreted. It is found in the cell projection. The protein resides in the lamellipodium. Its function is as follows. Acts in part as a hepatokine that is involved in regulation of lipid and glucose metabolism. Proposed to play a role in the trafficking of energy substrates to either storage or oxidative tissues in response to food intake. Has a stimulatory effect on plasma triglycerides (TG), which is achieved by suppressing plasma TG clearance via inhibition of LPL activity; the function seems to be specific for the feeding conditions. The inhibition of LPL activity appears to be an indirect mechanism involving recruitment of proprotein convertases PCSK6 and FURIN to LPL leading to cleavage and dissociation of LPL from the cell surface; the function does not require ANGPTL3 proteolytic cleavage but seems to be mediated by the N-terminal domain, and is not inhibited by GPIHBP1. Can inhibit endothelial lipase, causing increased plasma levels of high density lipoprotein (HDL) cholesterol and phospholipids; the cleaved N-terminal domain is more efficient than the uncleaved proprotein. Can bind to adipocytes to activate lipolysis, releasing free fatty acids and glycerol. Suppresses LPL specifically in oxidative tissues which is required to route very low density lipoprotein (VLDL)-TG to white adipose tissue (WAT) for storage in response to food; the function may involve cooperation with circulating, liver-derived ANGPTL8 and ANGPTL4 expression in WAT. Contributes to lower plasma levels of low density lipoprotein (LDL)-cholesterol by a mechanism that is independent of the canonical pathway implicating APOE and LDLR. May stimulate hypothalamic LPL activity. Involved in angiogenesis. Binds to endothelial cells via integrin alpha-V/beta-3 (ITGAV:ITGB3), activates FAK, MAPK and Akt signaling pathways and induces cell adhesion and cell migration. May increase the motility of podocytes. Secreted from podocytes, may modulate properties of glomerular endothelial cells involving integrin alpha-V/beta-3 and Akt signaling. May induce actin filament rearrangements in podocytes implicating integrin alpha-V/beta-3 and Rac1 activation. Binds to hematopoietic stem cells (HSC) and is involved in the regulation of HSC activity probably implicating down-regulation of IKZF1/IKAROS. The polypeptide is Angiopoietin-related protein 3 (Angptl3) (Mus musculus (Mouse)).